A 98-amino-acid chain; its full sequence is Large ribosomal subunit protein eL21 (98 aa).

This sequence belongs to the eukaryotic ribosomal protein eL21 family.

The chain is Large ribosomal subunit protein eL21 from Korarchaeum cryptofilum (strain OPF8).